We begin with the raw amino-acid sequence, 45 residues long: Large ribosomal subunit protein bL34 (45 aa).

Residues 1–45 (MTKRTFGGTSRKRKRVSGFRVRMRTHTGRSVIRSRRKKGRSRIAV) form a disordered region. Positions 10–45 (SRKRKRVSGFRVRMRTHTGRSVIRSRRKKGRSRIAV) are enriched in basic residues.

Belongs to the bacterial ribosomal protein bL34 family.

The sequence is that of Large ribosomal subunit protein bL34 from Prochlorococcus marinus (strain SARG / CCMP1375 / SS120).